The primary structure comprises 157 residues: UPF0127 protein TK1120 (157 aa).

The protein belongs to the UPF0127 family.

The protein is UPF0127 protein TK1120 of Thermococcus kodakarensis (strain ATCC BAA-918 / JCM 12380 / KOD1) (Pyrococcus kodakaraensis (strain KOD1)).